We begin with the raw amino-acid sequence, 293 residues long: Elongation factor Ts (293 aa).

An involved in Mg(2+) ion dislocation from EF-Tu region spans residues 80–83 (TDFV).

It belongs to the EF-Ts family.

Its subcellular location is the cytoplasm. In terms of biological role, associates with the EF-Tu.GDP complex and induces the exchange of GDP to GTP. It remains bound to the aminoacyl-tRNA.EF-Tu.GTP complex up to the GTP hydrolysis stage on the ribosome. This chain is Elongation factor Ts, found in Paraburkholderia phytofirmans (strain DSM 17436 / LMG 22146 / PsJN) (Burkholderia phytofirmans).